The following is a 455-amino-acid chain: Chromosomal replication initiator protein DnaA (455 aa).

A domain I, interacts with DnaA modulators region spans residues 1-82 (MNRNTSSLWA…NPDFVVKLVE (82 aa)). The domain II stretch occupies residues 82-117 (EGVKPAPKQNNIVTTKQNAETAVDSEQHLQSVEFKT). The domain III, AAA+ region stretch occupies residues 118 to 335 (GLNSNHLFEN…GALNRVIANA (218 aa)). Positions 163, 165, 166, and 167 each coordinate ATP. Residues 336-455 (EFTGKTITID…WSNLIRTLSA (120 aa)) are domain IV, binds dsDNA.

The protein belongs to the DnaA family. As to quaternary structure, oligomerizes as a right-handed, spiral filament on DNA at oriC.

It is found in the cytoplasm. Plays an essential role in the initiation and regulation of chromosomal replication. ATP-DnaA binds to the origin of replication (oriC) to initiate formation of the DNA replication initiation complex once per cell cycle. Binds the DnaA box (a 9 base pair repeat at the origin) and separates the double-stranded (ds)DNA. Forms a right-handed helical filament on oriC DNA; dsDNA binds to the exterior of the filament while single-stranded (ss)DNA is stabiized in the filament's interior. The ATP-DnaA-oriC complex binds and stabilizes one strand of the AT-rich DNA unwinding element (DUE), permitting loading of DNA polymerase. After initiation quickly degrades to an ADP-DnaA complex that is not apt for DNA replication. Binds acidic phospholipids. This chain is Chromosomal replication initiator protein DnaA, found in Actinobacillus succinogenes (strain ATCC 55618 / DSM 22257 / CCUG 43843 / 130Z).